The primary structure comprises 110 residues: uncharacterized protein (110 aa).

The first 19 residues, 1 to 19 (MKYLVGCLCLAAICLSAGA), serve as a signal peptide directing secretion. Residue asparagine 101 is glycosylated (N-linked (GlcNAc...) asparagine).

Component of the acid-soluble and acid-insoluble organic matrix of prismatic shell layers (at protein level).

The protein resides in the secreted. This is an uncharacterized protein from Haliotis asinina (Donkey's ear abalone).